The primary structure comprises 438 residues: DNA primase DnaG (438 aa).

Positions 169 to 243 (DSIIVVEGRA…DIDYVARAPY (75 aa)) constitute a Toprim domain. The Mg(2+) site is built by E175, D217, and D219.

The protein belongs to the archaeal DnaG primase family. Forms a ternary complex with MCM helicase and DNA. Mg(2+) is required as a cofactor.

The enzyme catalyses ssDNA + n NTP = ssDNA/pppN(pN)n-1 hybrid + (n-1) diphosphate.. In terms of biological role, RNA polymerase that catalyzes the synthesis of short RNA molecules used as primers for DNA polymerase during DNA replication. This is DNA primase DnaG from Methanococcus maripaludis (strain C5 / ATCC BAA-1333).